Reading from the N-terminus, the 93-residue chain is MKKLVLLSALVLLAYQVQTDPIQNTDEETNTEEQPGEEDQAVSVSFGGQEGSALHEKLSRDLICLCRKRRCNRGELFYGTCAGPFLRCCRRRR.

The N-terminal stretch at 1–19 (MKKLVLLSALVLLAYQVQT) is a signal peptide. Residues 20-58 (DPIQNTDEETNTEEQPGEEDQAVSVSFGGQEGSALHEKL) constitute a propeptide that is removed on maturation. The interval 22-41 (IQNTDEETNTEEQPGEEDQA) is disordered. Acidic residues predominate over residues 25-40 (TDEETNTEEQPGEEDQ). Disulfide bonds link Cys-64–Cys-89, Cys-66–Cys-81, and Cys-71–Cys-88.

It belongs to the alpha-defensin family.

The protein localises to the secreted. In terms of biological role, may have microbicidal activities. This Mus musculus (Mouse) protein is Alpha-defensin 22 (Defa22).